The sequence spans 310 residues: Small ribosomal subunit biogenesis GTPase RsgA (310 aa).

The 162-residue stretch at 77-238 (LSKQSHILAA…IIDTPGIKGF (162 aa)) folds into the CP-type G domain. GTP is bound by residues 126–129 (NKTD) and 180–188 (GNSGVGKST). The Zn(2+) site is built by Cys262, Cys267, His269, and Cys275.

It belongs to the TRAFAC class YlqF/YawG GTPase family. RsgA subfamily. Monomer. Associates with 30S ribosomal subunit, binds 16S rRNA. Requires Zn(2+) as cofactor.

The protein resides in the cytoplasm. In terms of biological role, one of several proteins that assist in the late maturation steps of the functional core of the 30S ribosomal subunit. Helps release RbfA from mature subunits. May play a role in the assembly of ribosomal proteins into the subunit. Circularly permuted GTPase that catalyzes slow GTP hydrolysis, GTPase activity is stimulated by the 30S ribosomal subunit. In Phocaeicola vulgatus (strain ATCC 8482 / DSM 1447 / JCM 5826 / CCUG 4940 / NBRC 14291 / NCTC 11154) (Bacteroides vulgatus), this protein is Small ribosomal subunit biogenesis GTPase RsgA.